The chain runs to 356 residues: Methylthioribose-1-phosphate isomerase (356 aa).

Residues 53–55 (RGA), arginine 97, and glutamine 203 contribute to the substrate site. The active-site Proton donor is aspartate 244. Substrate is bound at residue 254 to 255 (NK).

This sequence belongs to the eIF-2B alpha/beta/delta subunits family. MtnA subfamily.

It catalyses the reaction 5-(methylsulfanyl)-alpha-D-ribose 1-phosphate = 5-(methylsulfanyl)-D-ribulose 1-phosphate. The protein operates within amino-acid biosynthesis; L-methionine biosynthesis via salvage pathway; L-methionine from S-methyl-5-thio-alpha-D-ribose 1-phosphate: step 1/6. In terms of biological role, catalyzes the interconversion of methylthioribose-1-phosphate (MTR-1-P) into methylthioribulose-1-phosphate (MTRu-1-P). The chain is Methylthioribose-1-phosphate isomerase from Rhodopirellula baltica (strain DSM 10527 / NCIMB 13988 / SH1).